A 153-amino-acid polypeptide reads, in one-letter code: Pheromone-binding protein Gp-9 (153 aa).

An N-terminal signal peptide occupies residues 1 to 19 (MKTFVLHIFIFAFVAFASA). 3 disulfides stabilise this stretch: C37–C77, C73–C129, and C118–C138.

This sequence belongs to the PBP/GOBP family. Homodimer.

It localises to the secreted. Colony queen number, a major feature of social organization, is associated with worker genotype for Gp-9. Colonies are headed by either a single reproductive queen (monogyne form) or multiple queens (polygyne form). Differences in worker Gp-9 genotypes between social forms may cause differences in workers' abilities to recognize queens and regulate their numbers. In Solenopsis geminata (Tropical fire ant), this protein is Pheromone-binding protein Gp-9.